We begin with the raw amino-acid sequence, 172 residues long: uncharacterized protein (172 aa).

2 disordered regions span residues 1–39 (MAKV…NSNN) and 90–112 (DLNG…GSIN). Over residues 98 to 110 (NDSNNDNSPSRGS) the composition is skewed to low complexity.

This is an uncharacterized protein from Dictyostelium discoideum (Social amoeba).